We begin with the raw amino-acid sequence, 266 residues long: Hydroxyethylthiazole kinase (266 aa).

A substrate-binding site is contributed by M45. ATP contacts are provided by R120 and T165. A192 lines the substrate pocket.

It belongs to the Thz kinase family. Mg(2+) serves as cofactor.

It carries out the reaction 5-(2-hydroxyethyl)-4-methylthiazole + ATP = 4-methyl-5-(2-phosphooxyethyl)-thiazole + ADP + H(+). It participates in cofactor biosynthesis; thiamine diphosphate biosynthesis; 4-methyl-5-(2-phosphoethyl)-thiazole from 5-(2-hydroxyethyl)-4-methylthiazole: step 1/1. Catalyzes the phosphorylation of the hydroxyl group of 4-methyl-5-beta-hydroxyethylthiazole (THZ). This is Hydroxyethylthiazole kinase from Psychrobacter sp. (strain PRwf-1).